Consider the following 133-residue polypeptide: Profilin Sal k 4.0101 (133 aa).

A disulfide bridge links C95 with C117.

The protein belongs to the profilin family. Occurs in many kinds of cells as a complex with monomeric actin in a 1:1 ratio. In terms of tissue distribution, expressed in pollen.

It localises to the cytoplasm. It is found in the cytoskeleton. Binds to actin and affects the structure of the cytoskeleton. At high concentrations, profilin prevents the polymerization of actin, whereas it enhances it at low concentrations. The polypeptide is Profilin Sal k 4.0101 (Kali turgidum (Prickly saltwort)).